A 212-amino-acid chain; its full sequence is Large ribosomal subunit protein uL3 (212 aa).

The tract at residues Arg-133–Lys-152 is disordered.

This sequence belongs to the universal ribosomal protein uL3 family. Part of the 50S ribosomal subunit. Forms a cluster with proteins L14 and L19.

One of the primary rRNA binding proteins, it binds directly near the 3'-end of the 23S rRNA, where it nucleates assembly of the 50S subunit. The protein is Large ribosomal subunit protein uL3 of Syntrophomonas wolfei subsp. wolfei (strain DSM 2245B / Goettingen).